We begin with the raw amino-acid sequence, 387 residues long: Carboxyaminopropylagmatine decarboxylase (387 aa).

Lysine 52 is subject to N6-(pyridoxal phosphate)lysine.

The protein belongs to the Orn/Lys/Arg decarboxylase class-II family. The cofactor is pyridoxal 5'-phosphate.

The catalysed reaction is N(1)-[(S)-3-amino-3-carboxypropyl]agmatine + H(+) = N(1)-(3-aminopropyl)agmatine + CO2. It participates in amine and polyamine biosynthesis; spermidine biosynthesis. In terms of biological role, decarboxylase involved in the biosynthesis of spermidine via the carboxyaminopropylagmatine (CAPA) pathway. Catalyzes the decarboxylation of CAPA to form aminopropylagmatine (APA). Can also decarboxylate carboxyspermidine and carboxynorspermidine, but not ornithine, arginine, lysine and meso-diaminopimelate. The sequence is that of Carboxyaminopropylagmatine decarboxylase from Synechocystis sp. (strain ATCC 27184 / PCC 6803 / Kazusa).